Consider the following 73-residue polypeptide: Large ribosomal subunit protein bL32c (73 aa).

It belongs to the bacterial ribosomal protein bL32 family.

It localises to the plastid. It is found in the chloroplast. This Jasminum nudiflorum (Winter jasmine) protein is Large ribosomal subunit protein bL32c.